The chain runs to 330 residues: Serine/threonine-protein phosphatase PP1-alpha catalytic subunit (330 aa).

An N-acetylserine modification is found at S2. 2 positions are modified to phosphoserine: S2 and S22. Mn(2+) is bound by residues D64, H66, D92, and N124. Catalysis depends on H125, which acts as the Proton donor. Mn(2+) is bound by residues H173 and H248. K305 bears the N6-acetyllysine mark. Position 306 is a phosphotyrosine (Y306). A disordered region spans residues 306 to 330 (YGQFSGLNPGGRPITPPRNSAKAKK). Position 320 is a phosphothreonine (T320). S325 carries the phosphoserine modification.

It belongs to the PPP phosphatase family. PP-1 subfamily. In terms of assembly, PP1 comprises a catalytic subunit, PPP1CA, PPP1CB or PPP1CC, which is folded into its native form by inhibitor 2 and glycogen synthetase kinase 3, and then complexed to one or several targeting or regulatory subunits. PPP1R12A, PPP1R12B and PPP1R12C mediate binding to myosin. PPP1R3A (in skeletal muscle), PPP1R3B (in liver), PPP1R3C, PPP1R3D and PPP1R3F (in brain) mediate binding to glycogen. Interacts with PPP1R15A and PPP1R15B; the interactions mediate binding to EIF2S1. Part of a complex containing PPP1R15B, PP1 and NCK1/2. Interacts with PPP1R9A, PPP1R9B and PPP1R7. Interacts with YLPM1. Forms a complex with ILF2, ILF3, YLPM1, KHDRBS1, RBMX and NCOA5. Interacts with NOM1 and PPP1R8. Interacts with PPP1R16B. Interacts with RPSA only in the presence of PPP1R16B. Component of the PNUTS-PP1 phosphatase complex, composed of PPP1R10/PNUTS, TOX4, WDR82, and PPP1CA or PPP1CB or PPP1CC. Interacts with PPP1R10/PNUTS and PPP1R8. Interacts with WDR82 in the presence of PPP1R10/PNUTS. Interacts with PPP1R39. transition from mitosis into interphase. Interacts with TRIM28; the interaction dephosphorylates TRIM28 on 'Ser-824' and forms a complex at the p21 promoter site. Interacts with NEK2. Interacts with PHACTR4; which acts as an activator of PP1 activity. Interacts with FER; this promotes phosphorylation at Thr-320. Interacts with BTBD10. Interacts with KCTD20. Interacts with FOXP3. Interacts with CENPA. Interacts with ATG16L1. Found in a complex with PPP1CA, PPP1CC, SHC1 and PEAK1. Interacts with tensin TNS1. Interacts with SAXO4, PPP1R21, PPP1R26, PPP1R27, PPP1R35, PPP1R36, PPP1R37, SH3RF2, ELFN1 and ELFN2. Interacts with TPRN; the interaction results in inhibition of PPC1A phosphatase activity. Interacts with SKA1 (via C-terminus); the interaction is direct and required for the recruitment of PP1 to the kinetochore. Interacts with the KNL1 complex subunit KNL1; the interaction is direct and mutually exclusive with KNL1 binding to microtubules. Component of the SHOC2-MRAS-PP1c (SMP) complex consisting of SHOC2, GTP-bound M-Ras/MRAS and the catalytic subunit of protein phosphatase 1 (either PPP1CA, PPP1CB or PPP1CC). SHOC2 and PP1c preferably bind M-Ras/MRAS, but they also bind K-Ras/KRAS, N-Ras/NRAS and H-Ras/HRAS; these interactions are GTP-dependent and both SHOC2 and PP1c are required to form a stable complex. Interacts with SHOC2 in the absence of Ras GTPases. Mn(2+) is required as a cofactor. Phosphorylated. Dephosphorylated at Thr-320 in the presence of ionizing radiation.

It is found in the cytoplasm. It localises to the nucleus. The protein resides in the nucleoplasm. The protein localises to the nucleolus. The enzyme catalyses O-phospho-L-seryl-[protein] + H2O = L-seryl-[protein] + phosphate. It catalyses the reaction O-phospho-L-threonyl-[protein] + H2O = L-threonyl-[protein] + phosphate. Functionally, protein phosphatase that associates with over 200 regulatory proteins to form highly specific holoenzymes which dephosphorylate hundreds of biological targets. Protein phosphatase 1 (PP1) is essential for cell division, transcription elongation, and participates in the regulation of glycogen metabolism, muscle contractility and protein synthesis. Involved in regulation of ionic conductances and long-term synaptic plasticity. May play an important role in dephosphorylating substrates such as the postsynaptic density-associated Ca(2+)/calmodulin dependent protein kinase II. Catalytic component of the PNUTS-PP1 protein phosphatase complex, a protein phosphatase 1 (PP1) complex that promotes RNA polymerase II transcription pause-release, allowing transcription elongation: the PNUTS-PP1 complex mediates the release of RNA polymerase II from promoter-proximal region of genes by catalyzing dephosphorylation of proteins involved in transcription, such as AFF4, CDK9, MEPCE, INTS12, NCBP1, POLR2M/GDOWN1 and SUPT6H. The PNUTS-PP1 complex also regulates transcription termination by mediating dephosphorylation of SUPT5H in termination zones downstream of poly(A) sites, thereby promoting deceleration of RNA polymerase II transcription. PNUTS-PP1 complex is also involved in the response to replication stress by mediating dephosphorylation of POLR2A at 'Ser-5' of the CTD, promoting RNA polymerase II degradation. PNUTS-PP1 also plays a role in the control of chromatin structure and cell cycle progression during the transition from mitosis into interphase. Regulates NEK2 function in terms of kinase activity and centrosome number and splitting, both in the presence and absence of radiation-induced DNA damage. Regulator of neural tube and optic fissure closure, and enteric neural crest cell (ENCCs) migration during development. In balance with CSNK1D and CSNK1E, determines the circadian period length, through the regulation of the speed and rhythmicity of PER1 and PER2 phosphorylation. May dephosphorylate CSNK1D and CSNK1E. Dephosphorylates the 'Ser-418' residue of FOXP3 in regulatory T-cells (Treg) from patients with rheumatoid arthritis, thereby inactivating FOXP3 and rendering Treg cells functionally defective. Dephosphorylates CENPA. Dephosphorylates the 'Ser-139' residue of ATG16L1 causing dissociation of ATG12-ATG5-ATG16L1 complex, thereby inhibiting autophagy. Together with PPP1CC (PP1-gamma subunit), dephosphorylates IFIH1/MDA5 and RIG-I leading to their activation and a functional innate immune response. Core component of the SHOC2-MRAS-PP1c (SMP) holophosphatase complex that regulates the MAPK pathway activation. The SMP complex specifically dephosphorylates the inhibitory phosphorylation at 'Ser-259' of RAF1 kinase, 'Ser-365' of BRAF kinase and 'Ser-214' of ARAF kinase, stimulating their kinase activities. The SMP complex enhances the dephosphorylation activity and substrate specificity of PP1c. The polypeptide is Serine/threonine-protein phosphatase PP1-alpha catalytic subunit (PPP1CA) (Canis lupus familiaris (Dog)).